We begin with the raw amino-acid sequence, 580 residues long: Arrestin domain-containing protein A (580 aa).

Residues Asn-27, Asn-33, and Asn-60 are each glycosylated (N-linked (GlcNAc...) asparagine). The segment at 31-54 (NVNTTSSHHHHHSNSGNAEVSFNG) is disordered. Disordered regions lie at residues 67–86 (ETHS…EISI) and 95–114 (MTMS…HKES). Residues 118 to 138 (NLSLGGIVGAVVGAVTGGVMI) form a helical membrane-spanning segment. N-linked (GlcNAc...) asparagine glycosylation is found at Asn-149, Asn-341, and Asn-342. The segment at 468-528 (DEHATACRKC…VCEECYPIAT (61 aa)) adopts an FYVE-type zinc-finger fold. The Zn(2+) site is built by Cys-474, Cys-477, Cys-490, Cys-493, Cys-498, Cys-501, Cys-520, and Cys-523.

It belongs to the arrestin family.

The protein resides in the membrane. The polypeptide is Arrestin domain-containing protein A (adcA) (Dictyostelium discoideum (Social amoeba)).